Here is a 475-residue protein sequence, read N- to C-terminus: MTTILTCPFKKLPTTSKWALRFAIRPLSCSSQLRAAPAVQTKTKKTLAKPNIRNVVVVDGVRTPFLLSGTSYKDLMPHDLARAALTGLLHRTSVPKEVVDYIIFGTVIQEVKTSNVAREAALGAGFSDKTPAHTVTMACISANQAMTTGVGLIASGQCDVIVAGGVELMSDIPIRHSRKMRKLMLDLNKAKSMGQRLSLISKFRLNFLAPELPAVAEFSTSETMGHSADRLAAAFAVSRLEQDEYALRSHSLAKKAQDEGLLSDVVPFRVPGKDTVTKDNGIRPSSLEQMAKLKPAFIKPYGTVTAANSSFLTDGASAMLIMAEEKALAMGYKPKAYLRDFMYVSQDPKDQLLLGPTYATPKVLEKAGLTMNDIDAFEFHEAFSGQILANFKAMDSDWFAENYMGRKTKVGLPPLEKFNNWGGSLSLGHPFGATGCRLVMAAANRLRKEGGQYGLVAACAAGGQGHAMIVEAYPK.

A mitochondrion-targeting transit peptide spans 1–34 (MTTILTCPFKKLPTTSKWALRFAIRPLSCSSQLR). N6-acetyllysine; alternate is present on Lys73. N6-succinyllysine; alternate is present on Lys73. Cys139 acts as the Acyl-thioester intermediate in catalysis. An intramembrane segment occupies 174–221 (IRHSRKMRKLMLDLNKAKSMGQRLSLISKFRLNFLAPELPAVAEFSTS). N6-acetyllysine; alternate is present on Lys189. The residue at position 189 (Lys189) is an N6-succinyllysine; alternate. An N6-succinyllysine mark is found at Lys191, Lys273, and Lys292. N6-acetyllysine; alternate is present on Lys294. The residue at position 294 (Lys294) is an N6-succinyllysine; alternate. At Lys299 the chain carries N6-acetyllysine. Lys333 is subject to N6-acetyllysine; alternate. Position 333 is an N6-succinyllysine; alternate (Lys333). 2 positions are modified to N6-acetyllysine: Lys349 and Lys362. Catalysis depends on Cys459, which acts as the Proton donor/acceptor.

It belongs to the thiolase-like superfamily. Thiolase family. Heterotetramer of 2 alpha/HADHA and 2 beta/HADHB subunits; forms the mitochondrial trifunctional enzyme. Also purified as higher order heterooligomers including a 4 alpha/HADHA and 4 beta/HADHB heterooligomer which physiological significance remains unclear. The mitochondrial trifunctional enzyme interacts with MTLN. Interacts with RSAD2/viperin.

The protein resides in the mitochondrion. It localises to the mitochondrion inner membrane. The protein localises to the mitochondrion outer membrane. Its subcellular location is the endoplasmic reticulum. The catalysed reaction is an acyl-CoA + acetyl-CoA = a 3-oxoacyl-CoA + CoA. The enzyme catalyses butanoyl-CoA + acetyl-CoA = 3-oxohexanoyl-CoA + CoA. It carries out the reaction hexanoyl-CoA + acetyl-CoA = 3-oxooctanoyl-CoA + CoA. It catalyses the reaction octanoyl-CoA + acetyl-CoA = 3-oxodecanoyl-CoA + CoA. The catalysed reaction is decanoyl-CoA + acetyl-CoA = 3-oxododecanoyl-CoA + CoA. The enzyme catalyses dodecanoyl-CoA + acetyl-CoA = 3-oxotetradecanoyl-CoA + CoA. It carries out the reaction tetradecanoyl-CoA + acetyl-CoA = 3-oxohexadecanoyl-CoA + CoA. The protein operates within lipid metabolism; fatty acid beta-oxidation. In terms of biological role, mitochondrial trifunctional enzyme catalyzes the last three of the four reactions of the mitochondrial beta-oxidation pathway. The mitochondrial beta-oxidation pathway is the major energy-producing process in tissues and is performed through four consecutive reactions breaking down fatty acids into acetyl-CoA. Among the enzymes involved in this pathway, the trifunctional enzyme exhibits specificity for long-chain fatty acids. Mitochondrial trifunctional enzyme is a heterotetrameric complex composed of two proteins, the trifunctional enzyme subunit alpha/HADHA carries the 2,3-enoyl-CoA hydratase and the 3-hydroxyacyl-CoA dehydrogenase activities, while the trifunctional enzyme subunit beta/HADHB described here bears the 3-ketoacyl-CoA thiolase activity. This is Trifunctional enzyme subunit beta, mitochondrial (HADHB) from Macaca fascicularis (Crab-eating macaque).